The following is a 589-amino-acid chain: Cyclohexane-1,2-dione hydrolase (589 aa).

Residue Glu52 coordinates thiamine diphosphate. Residues 400–480 (NHTLPMFGGA…VITMVFTNES (81 aa)) are thiamine pyrophosphate binding. Residues Asp451 and Asn478 each contribute to the Mg(2+) site.

The protein belongs to the TPP enzyme family. Homodimer. The cofactor is Mg(2+). It depends on thiamine diphosphate as a cofactor. FAD is required as a cofactor.

It carries out the reaction cyclohexan-1,2-dione + H2O = 6-oxohexanoate + H(+). Its function is as follows. Catalyzes the ring-opening cleavage of the alicyclic alcohol cyclohexane-1,2-dione. This Azoarcus sp protein is Cyclohexane-1,2-dione hydrolase.